The sequence spans 170 residues: ATP synthase subunit b (170 aa).

Residues Gly11 to Leu31 form a helical membrane-spanning segment.

The protein belongs to the ATPase B chain family. F-type ATPases have 2 components, F(1) - the catalytic core - and F(0) - the membrane proton channel. F(1) has five subunits: alpha(3), beta(3), gamma(1), delta(1), epsilon(1). F(0) has three main subunits: a(1), b(2) and c(10-14). The alpha and beta chains form an alternating ring which encloses part of the gamma chain. F(1) is attached to F(0) by a central stalk formed by the gamma and epsilon chains, while a peripheral stalk is formed by the delta and b chains.

Its subcellular location is the cell membrane. F(1)F(0) ATP synthase produces ATP from ADP in the presence of a proton or sodium gradient. F-type ATPases consist of two structural domains, F(1) containing the extramembraneous catalytic core and F(0) containing the membrane proton channel, linked together by a central stalk and a peripheral stalk. During catalysis, ATP synthesis in the catalytic domain of F(1) is coupled via a rotary mechanism of the central stalk subunits to proton translocation. Functionally, component of the F(0) channel, it forms part of the peripheral stalk, linking F(1) to F(0). The sequence is that of ATP synthase subunit b from Bacillus pumilus (strain SAFR-032).